A 787-amino-acid polypeptide reads, in one-letter code: Protein translocase subunit SecA (787 aa).

ATP-binding positions include glutamine 85, 103 to 107, and aspartate 492; that span reads GEGKT.

Belongs to the SecA family. As to quaternary structure, monomer and homodimer. Part of the essential Sec protein translocation apparatus which comprises SecA, SecYEG and auxiliary proteins SecDF. Other proteins may also be involved.

The protein localises to the cell membrane. Its subcellular location is the cytoplasm. It carries out the reaction ATP + H2O + cellular proteinSide 1 = ADP + phosphate + cellular proteinSide 2.. Part of the Sec protein translocase complex. Interacts with the SecYEG preprotein conducting channel. Has a central role in coupling the hydrolysis of ATP to the transfer of proteins into and across the cell membrane, serving as an ATP-driven molecular motor driving the stepwise translocation of polypeptide chains across the membrane. The chain is Protein translocase subunit SecA from Lacticaseibacillus casei (strain BL23) (Lactobacillus casei).